Consider the following 236-residue polypeptide: 2,3,4,5-tetrahydropyridine-2,6-dicarboxylate N-acetyltransferase (236 aa).

The protein belongs to the transferase hexapeptide repeat family. DapH subfamily.

It catalyses the reaction (S)-2,3,4,5-tetrahydrodipicolinate + acetyl-CoA + H2O = L-2-acetamido-6-oxoheptanedioate + CoA. The protein operates within amino-acid biosynthesis; L-lysine biosynthesis via DAP pathway; LL-2,6-diaminopimelate from (S)-tetrahydrodipicolinate (acetylase route): step 1/3. In terms of biological role, catalyzes the transfer of an acetyl group from acetyl-CoA to tetrahydrodipicolinate. The chain is 2,3,4,5-tetrahydropyridine-2,6-dicarboxylate N-acetyltransferase from Pediococcus pentosaceus (strain ATCC 25745 / CCUG 21536 / LMG 10740 / 183-1w).